The primary structure comprises 367 residues: Ribosomal lysine N-methyltransferase 5 (367 aa).

Residues 55–74 form a disordered region; sequence EGGRKKKRVRRRNKASSVEE. Basic residues predominate over residues 58–68; it reads RKKKRVRRRNK. S-adenosyl-L-methionine-binding positions include Trp-110, 170–172, Asp-192, Trp-256, and Met-288; that span reads GAG.

This sequence belongs to the class I-like SAM-binding methyltransferase superfamily. RKM5 family.

Its function is as follows. S-adenosyl-L-methionine-dependent protein-lysine N-methyltransferase that monomethylates 60S ribosomal protein L1 (RPL1A and RPL1B) at 'Lys-46'. This Saccharomyces cerevisiae (strain RM11-1a) (Baker's yeast) protein is Ribosomal lysine N-methyltransferase 5 (RKM5).